Reading from the N-terminus, the 347-residue chain is S-adenosylmethionine:tRNA ribosyltransferase-isomerase (347 aa).

The protein belongs to the QueA family. As to quaternary structure, monomer.

The protein localises to the cytoplasm. The catalysed reaction is 7-aminomethyl-7-carbaguanosine(34) in tRNA + S-adenosyl-L-methionine = epoxyqueuosine(34) in tRNA + adenine + L-methionine + 2 H(+). It functions in the pathway tRNA modification; tRNA-queuosine biosynthesis. Transfers and isomerizes the ribose moiety from AdoMet to the 7-aminomethyl group of 7-deazaguanine (preQ1-tRNA) to give epoxyqueuosine (oQ-tRNA). This chain is S-adenosylmethionine:tRNA ribosyltransferase-isomerase, found in Xylella fastidiosa (strain M23).